Here is a 442-residue protein sequence, read N- to C-terminus: DNA topoisomerase medium subunit (442 aa).

One can recognise a Topo IIA-type catalytic domain in the interval 29 to 438; that stretch reads IPNMIDGFKP…DVVTEYTKDL (410 aa). Tyr-117 functions as the O-(5'-phospho-DNA)-tyrosine intermediate in the catalytic mechanism.

Belongs to the type II topoisomerase family. Part of the DNA topoisomerase complex made of gp39, gp52 and gp60. Mg(2+) serves as cofactor.

The enzyme catalyses ATP-dependent breakage, passage and rejoining of double-stranded DNA.. Functionally, medium subunit of the DNA topoisomerase that untwists superhelical DNA. Controls topological states of double-stranded DNA by transient breakage and subsequent rejoining of DNA strands. The sequence is that of DNA topoisomerase medium subunit (52) from Enterobacteria phage T4 (Bacteriophage T4).